The following is a 428-amino-acid chain: Light-independent protochlorophyllide reductase subunit N (428 aa).

Residues cysteine 29, cysteine 54, and cysteine 115 each coordinate [4Fe-4S] cluster.

This sequence belongs to the BchN/ChlN family. Protochlorophyllide reductase is composed of three subunits; BchL, BchN and BchB. Forms a heterotetramer of two BchB and two BchN subunits. The cofactor is [4Fe-4S] cluster.

The enzyme catalyses chlorophyllide a + oxidized 2[4Fe-4S]-[ferredoxin] + 2 ADP + 2 phosphate = protochlorophyllide a + reduced 2[4Fe-4S]-[ferredoxin] + 2 ATP + 2 H2O. It functions in the pathway porphyrin-containing compound metabolism; bacteriochlorophyll biosynthesis (light-independent). In terms of biological role, component of the dark-operative protochlorophyllide reductase (DPOR) that uses Mg-ATP and reduced ferredoxin to reduce ring D of protochlorophyllide (Pchlide) to form chlorophyllide a (Chlide). This reaction is light-independent. The NB-protein (BchN-BchB) is the catalytic component of the complex. In Roseobacter denitrificans (strain ATCC 33942 / OCh 114) (Erythrobacter sp. (strain OCh 114)), this protein is Light-independent protochlorophyllide reductase subunit N.